Consider the following 157-residue polypeptide: XylDLEGF operon transcriptional activator 2 (157 aa).

In terms of domain architecture, HTH araC/xylS-type spans 39–140 (ERVVQFIEEN…GELPSDTLSL (102 aa)). 2 consecutive DNA-binding regions (H-T-H motif) follow at residues 56–77 (EQLA…EKHT) and 107–130 (ITEV…RSTF).

Its subcellular location is the cytoplasm. Functionally, regulatory protein of the TOL plasmid xyl operons. XylS activates the xylXYZLTEGFJQKIH operon required for the degradation of toluene, m-xylene and p-xylene. The chain is XylDLEGF operon transcriptional activator 2 (xylS2) from Pseudomonas putida (Arthrobacter siderocapsulatus).